Here is a 632-residue protein sequence, read N- to C-terminus: DNA gyrase subunit B (632 aa).

The Toprim domain occupies 419 to 533; that stretch reads RELFIVEGES…SGYLYIAQPP (115 aa). Glu-425, Asp-498, and Asp-500 together coordinate Mg(2+).

Belongs to the type II topoisomerase GyrB family. In terms of assembly, heterotetramer, composed of two GyrA and two GyrB chains. In the heterotetramer, GyrA contains the active site tyrosine that forms a transient covalent intermediate with DNA, while GyrB binds cofactors and catalyzes ATP hydrolysis. Mg(2+) serves as cofactor. Requires Mn(2+) as cofactor. Ca(2+) is required as a cofactor.

It is found in the cytoplasm. The catalysed reaction is ATP-dependent breakage, passage and rejoining of double-stranded DNA.. A type II topoisomerase that negatively supercoils closed circular double-stranded (ds) DNA in an ATP-dependent manner to modulate DNA topology and maintain chromosomes in an underwound state. Negative supercoiling favors strand separation, and DNA replication, transcription, recombination and repair, all of which involve strand separation. Also able to catalyze the interconversion of other topological isomers of dsDNA rings, including catenanes and knotted rings. Type II topoisomerases break and join 2 DNA strands simultaneously in an ATP-dependent manner. The sequence is that of DNA gyrase subunit B from Archaeoglobus fulgidus (strain ATCC 49558 / DSM 4304 / JCM 9628 / NBRC 100126 / VC-16).